The following is a 203-amino-acid chain: Small ribosomal subunit protein uS4 (203 aa).

The S4 RNA-binding domain occupies 93–156 (RRLDNVVYRL…AKVPAILEAV (64 aa)).

The protein belongs to the universal ribosomal protein uS4 family. As to quaternary structure, part of the 30S ribosomal subunit. Contacts protein S5. The interaction surface between S4 and S5 is involved in control of translational fidelity.

In terms of biological role, one of the primary rRNA binding proteins, it binds directly to 16S rRNA where it nucleates assembly of the body of the 30S subunit. With S5 and S12 plays an important role in translational accuracy. The protein is Small ribosomal subunit protein uS4 of Streptococcus mutans serotype c (strain ATCC 700610 / UA159).